A 229-amino-acid chain; its full sequence is Potassium/proton antiporter CemA (229 aa).

4 consecutive transmembrane segments (helical) span residues 7–27 (FIPLLYLTSIVFLPWCISFTF), 107–127 (ILHFSTNIICFFILSGYSILG), 154–174 (ILLLTDLCIGFHSTHGWELVI), and 189–209 (IISGLVSTFPVILDTILKYWI).

This sequence belongs to the CemA family.

The protein localises to the plastid. It localises to the chloroplast inner membrane. It carries out the reaction K(+)(in) + H(+)(out) = K(+)(out) + H(+)(in). Its function is as follows. Contributes to K(+)/H(+) antiport activity by supporting proton efflux to control proton extrusion and homeostasis in chloroplasts in a light-dependent manner to modulate photosynthesis. Prevents excessive induction of non-photochemical quenching (NPQ) under continuous-light conditions. Indirectly promotes efficient inorganic carbon uptake into chloroplasts. This is Potassium/proton antiporter CemA from Glycine max (Soybean).